A 357-amino-acid chain; its full sequence is Geranylgeranyl pyrophosphate synthase spyE (357 aa).

The tract at residues 36–60 (EAQSQAVPGTRTETEPTGSSPSDLQ) is disordered. A compositionally biased stretch (polar residues) spans 50–59 (EPTGSSPSDL). Positions 84, 87, and 116 each coordinate isopentenyl diphosphate. Mg(2+) contacts are provided by Asp-123 and Asp-127. Arg-132 lines the dimethylallyl diphosphate pocket. An isopentenyl diphosphate-binding site is contributed by Arg-133. Dimethylallyl diphosphate contacts are provided by Lys-210, Thr-211, and Gln-244. Asp-247 lines the Mg(2+) pocket. Dimethylallyl diphosphate contacts are provided by Asn-251, Lys-261, and Lys-271.

It belongs to the FPP/GGPP synthase family. Mg(2+) serves as cofactor.

The catalysed reaction is isopentenyl diphosphate + dimethylallyl diphosphate = (2E)-geranyl diphosphate + diphosphate. It carries out the reaction isopentenyl diphosphate + (2E)-geranyl diphosphate = (2E,6E)-farnesyl diphosphate + diphosphate. It catalyses the reaction isopentenyl diphosphate + (2E,6E)-farnesyl diphosphate = (2E,6E,10E)-geranylgeranyl diphosphate + diphosphate. Its pathway is secondary metabolite biosynthesis; terpenoid biosynthesis. Functionally, geranylgeranyl pyrophosphate synthase; part of the gene cluster that mediates the biosynthesis of meroterpenoids called sartorypyrones. Within the pathway, spyE provides the spyF cosubstrate geranylgeranyl pyrophosphate (GGPP) for the prenylation of triacetic acid lactone (TAL). The biosynthesis of sartorypyrones begins with the production of triacetic acid lactone (TAL) by the NR-PKS spyA using one molecule of acetyl-CoA and two molecules of malonyl-CoA. The prenyltransferase spyF then conjugates geranylgeranyl pyrophosphate (GGPP) to TAL to form geranylgeranyl-triacetate lactone, for which the pathway-specific geranylgeranyl pyrophosphate synthase (GGPS) spyE is required to provide GGPP. Subsequently, geranylgeranyl-triacetate lactone is epoxidized at the terminal olein by the FAD-dependent monooxygenase spyC, followed by cyclization of the terpenoid component catalyzed by the terpene cyclase spyD to produce both the bicyclic sartorypyrone F and the monocyclic sartorypyrone D. Finally, the last step of the biosynthesis involves the acetylation of the meroterpenoids sartorypyrones D and F by the acetyltransferase SpyB to produce sartorypyrones A and G, respectively. This is Geranylgeranyl pyrophosphate synthase spyE from Aspergillus fumigatus (strain ATCC MYA-4609 / CBS 101355 / FGSC A1100 / Af293) (Neosartorya fumigata).